We begin with the raw amino-acid sequence, 681 residues long: MENRNTHTHPESKADAPAVQSSSGLSSTKKKTDSEPTVSAGQTGLADATERDNRKQPVAPRGPERELRPTGSSQDGSGELPTQEPSARPRTTQDGPRELQAGPEQVQPSGDFVASEGRPQPAMQTKDQQKRWQSAEVKEILLAESCQGNTDHDLGKPRPSNSRSQPLKNNSPSEAGRPQVRLQEPMPAPGSGTHKDNPQEAVPPKPKVTAEEKKAPPVLPSVPGPRTHKDRGEAAEIRATLRLQPPPPPLPEERDTEKKELGQGQKQRQQALSAAGTQGPANSRRGFMKCLLEVEEQEEATHRRTLKSRGLTARRSPKTVTSVSTSGPISSSVPTLPLTLHEPSTSAPASVPSWVRPPAPGQTPIPMGSPGSVLPTSAQDQNWRWPEFLPQGNERTLTYAKILRQEPEEHSLFRMYQSWEERTEEHLTLKQEEAFRSYFDIFNGPGEVDARSLKNILLLIGFTFTPAQVEEALMSADVNGDGHVDFKDFLAVMTDTKRFFCSVEQNVLMDMSPRNPYTLFFEILSLLVEMLALPELALEEITNYYQKKLKEGSSKAREMESAMGGLRQRKKIPYNPQQVENLEVPERRVLRILSRLKQQNYAANLQSPYAQVPCIPLCPRLDKKAVRRKLASHNHSVLDQCVSTSLGPDFHGLFFQPGQQGSREHSSDSRKWLSSMPARTH.

A compositionally biased stretch (basic and acidic residues) spans 1–14 (MENRNTHTHPESKA). Disordered regions lie at residues 1–284 (MENR…ANSR) and 298–336 (EEATHRRTLKSRGLTARRSPKTVTSVSTSGPISSSVPTL). Polar residues-rich tracts occupy residues 83-94 (QEPSARPRTTQD) and 159-173 (PSNSRSQPLKNNSPS). Residues 251-261 (PEERDTEKKEL) show a composition bias toward basic and acidic residues. Residues 264 to 281 (GQKQRQQALSAAGTQGPA) show a composition bias toward polar residues. Over residues 319–335 (TVTSVSTSGPISSSVPT) the composition is skewed to low complexity. One can recognise an EF-hand domain in the interval 464-499 (FTPAQVEEALMSADVNGDGHVDFKDFLAVMTDTKRF). Residues Asp477, Asn479, Asp481, His483, and Asp488 each coordinate Ca(2+). Residues 653 to 681 (LFFQPGQQGSREHSSDSRKWLSSMPARTH) form a disordered region. The segment covering 662 to 671 (SREHSSDSRK) has biased composition (basic and acidic residues).

In terms of biological role, involved in the differentiation of haploid spermatids. In Mus musculus (Mouse), this protein is Spermatogenesis-associated protein 21 (Spata21).